Consider the following 319-residue polypeptide: Probable enoyl-CoA hydratase alpha subunit (319 aa).

The interval 199–298 is DUF35; the sequence is FEAAKQRRLV…EIGMPVVLDW (100 aa).

It belongs to the thioester dehydratase family. In terms of assembly, heterodimer composed of ChsH1 and ChsH2. Two heterodimers combine to form a heterotetramer. The complex interacts with Ltp2 via the DUF35 C-terminal region of ChsH2.

In terms of biological role, probably involved in bile acid degradation. The sequence is that of Probable enoyl-CoA hydratase alpha subunit from Thermomonospora curvata (strain ATCC 19995 / DSM 43183 / JCM 3096 / KCTC 9072 / NBRC 15933 / NCIMB 10081 / Henssen B9).